The primary structure comprises 496 residues: Probable cytosol aminopeptidase (496 aa).

Positions 257 and 262 each coordinate Mn(2+). Residue Lys-269 is part of the active site. Mn(2+) contacts are provided by Asp-281, Asp-341, and Glu-343. Residue Arg-345 is part of the active site.

It belongs to the peptidase M17 family. Requires Mn(2+) as cofactor.

It localises to the cytoplasm. It carries out the reaction Release of an N-terminal amino acid, Xaa-|-Yaa-, in which Xaa is preferably Leu, but may be other amino acids including Pro although not Arg or Lys, and Yaa may be Pro. Amino acid amides and methyl esters are also readily hydrolyzed, but rates on arylamides are exceedingly low.. The catalysed reaction is Release of an N-terminal amino acid, preferentially leucine, but not glutamic or aspartic acids.. Its function is as follows. Presumably involved in the processing and regular turnover of intracellular proteins. Catalyzes the removal of unsubstituted N-terminal amino acids from various peptides. This Prochlorococcus marinus (strain SARG / CCMP1375 / SS120) protein is Probable cytosol aminopeptidase.